Consider the following 671-residue polypeptide: Pescadillo homolog (671 aa).

Coiled coils occupy residues 294 to 323 (NQAQ…ELFR) and 548 to 584 (QALR…TRKM). In terms of domain architecture, BRCT spans 317-403 (KVRELFRGLT…LVLPVTGYRI (87 aa)). 2 disordered regions span residues 552-577 (KAQE…VKRQ) and 634-671 (GLVN…KWVQ). Residues 634–651 (GLVNKRLEARRQRAEAKG) show a composition bias toward basic and acidic residues.

Belongs to the pescadillo family.

It localises to the nucleus. Its subcellular location is the nucleolus. The protein localises to the nucleoplasm. Its function is as follows. Required for maturation of ribosomal RNAs and formation of the large ribosomal subunit. The polypeptide is Pescadillo homolog (Leishmania major).